The chain runs to 119 residues: NADH-quinone oxidoreductase subunit A (119 aa).

The next 3 helical transmembrane spans lie at 7-27 (YPVL…VSIG), 63-83 (LVAI…PWGV), and 88-108 (IGWP…LGFA).

It belongs to the complex I subunit 3 family. NDH-1 is composed of 14 different subunits. Subunits NuoA, H, J, K, L, M, N constitute the membrane sector of the complex.

It localises to the cell inner membrane. It catalyses the reaction a quinone + NADH + 5 H(+)(in) = a quinol + NAD(+) + 4 H(+)(out). Its function is as follows. NDH-1 shuttles electrons from NADH, via FMN and iron-sulfur (Fe-S) centers, to quinones in the respiratory chain. The immediate electron acceptor for the enzyme in this species is believed to be ubiquinone. Couples the redox reaction to proton translocation (for every two electrons transferred, four hydrogen ions are translocated across the cytoplasmic membrane), and thus conserves the redox energy in a proton gradient. This is NADH-quinone oxidoreductase subunit A from Burkholderia mallei (strain NCTC 10247).